A 534-amino-acid chain; its full sequence is Zinc finger protein 69 homolog B (534 aa).

Residues Lys-37 and Lys-40 each participate in a glycyl lysine isopeptide (Lys-Gly) (interchain with G-Cter in SUMO2) cross-link. One can recognise a KRAB domain in the interval 74–145 (LTFKDVSVDF…ERDISGVPSS (72 aa)). Glycyl lysine isopeptide (Lys-Gly) (interchain with G-Cter in SUMO2) cross-links involve residues Lys-178 and Lys-235. 9 consecutive C2H2-type zinc fingers follow at residues 279 to 301 (FECNICEKIFKQLIHLTEHMRIH), 307 to 329 (FRCKECGKAFSQSSSLIPHQRIH), 335 to 357 (YECKECGKTFRHPSSLTQHVRIH), 363 to 385 (YECRVCEKAFSQSIGLIQHLRTH), 391 to 413 (FTCKDCGKAFFQIRHLRQHEIIH), 419 to 441 (YICNVCSKTFSHSTYLTQHQRTH), 447 to 469 (YKCKECGKAFSQRIHLSIHQRVH), 475 to 497 (YECSHCGKAFRHDSSFAKHQRIH), and 503 to 525 (YDCNECGKAFSCSSSLIRHCKTH).

The protein belongs to the krueppel C2H2-type zinc-finger protein family.

The protein localises to the nucleus. May be involved in transcriptional regulation. Essential for Golgi structural integrity. This is Zinc finger protein 69 homolog B (ZFP69B) from Homo sapiens (Human).